We begin with the raw amino-acid sequence, 364 residues long: Histidinol-phosphate aminotransferase (364 aa).

Position 226 is an N6-(pyridoxal phosphate)lysine (lysine 226).

This sequence belongs to the class-II pyridoxal-phosphate-dependent aminotransferase family. Histidinol-phosphate aminotransferase subfamily. As to quaternary structure, homodimer. Pyridoxal 5'-phosphate serves as cofactor.

It catalyses the reaction L-histidinol phosphate + 2-oxoglutarate = 3-(imidazol-4-yl)-2-oxopropyl phosphate + L-glutamate. It participates in amino-acid biosynthesis; L-histidine biosynthesis; L-histidine from 5-phospho-alpha-D-ribose 1-diphosphate: step 7/9. This Campylobacter jejuni subsp. jejuni serotype O:6 (strain 81116 / NCTC 11828) protein is Histidinol-phosphate aminotransferase.